We begin with the raw amino-acid sequence, 481 residues long: UDP-glycosyltransferase 71K2 (481 aa).

Residues serine 285, 350–351 (WA), 368–376 (HCGWNSILE), and 390–393 (YAEQ) contribute to the UDP-alpha-D-glucose site.

The protein belongs to the UDP-glycosyltransferase family.

Glycosyltransferase that possesses chalcone and flavonol 2'-O-glycosyltransferase activity. Converts phloretin to phlorizin (phloretin 2'-O-glucoside), a potent antioxidant. Possesses glycosyltransferase activity toward quercetin, isoliquiritigenin, butein and caffeic acid. This is UDP-glycosyltransferase 71K2 from Pyrus communis (Pear).